The chain runs to 210 residues: Oxygen-insensitive NADPH nitroreductase (210 aa).

An NADP(+)-binding site is contributed by 150 to 155 (GVSLMG).

The protein belongs to the nitroreductase family.

In terms of biological role, reduction of a variety of nitroaromatic compounds using NADPH as source of reducing equivalents; two electrons are transferred. This Helicobacter pylori (strain J99 / ATCC 700824) (Campylobacter pylori J99) protein is Oxygen-insensitive NADPH nitroreductase (rdxA).